The sequence spans 202 residues: NADH-quinone oxidoreductase subunit C (202 aa).

The protein belongs to the complex I 30 kDa subunit family. As to quaternary structure, NDH-1 is composed of 14 different subunits. Subunits NuoB, C, D, E, F, and G constitute the peripheral sector of the complex.

It is found in the cell inner membrane. It catalyses the reaction a quinone + NADH + 5 H(+)(in) = a quinol + NAD(+) + 4 H(+)(out). Functionally, NDH-1 shuttles electrons from NADH, via FMN and iron-sulfur (Fe-S) centers, to quinones in the respiratory chain. The immediate electron acceptor for the enzyme in this species is believed to be ubiquinone. Couples the redox reaction to proton translocation (for every two electrons transferred, four hydrogen ions are translocated across the cytoplasmic membrane), and thus conserves the redox energy in a proton gradient. The polypeptide is NADH-quinone oxidoreductase subunit C (Bartonella henselae (strain ATCC 49882 / DSM 28221 / CCUG 30454 / Houston 1) (Rochalimaea henselae)).